Consider the following 310-residue polypeptide: MMLTVTMNPSIDIAYQLDDLKVDTVNRVIETHKTPGGKGLNVTRVLSQLGDDVLASGLLGGKLGEFLEAELDKSAIKHSFYKISAETRNCIAILHGGYQTEILEQGPYVSAKESKGFLEFFEKLLPKLEVVAISGSLPKGVPVDYYSQMIAICKQHQVPIVLDCSGQALLEVLNGAAKPTVIKPNTEELSQIMEREITNDVAVLKHALASPIFSGIDWIIVSLGSQGAFAKHGQTFYKVTIPKIAVVNPVGSGDSTVAGITSALAAGASDEKLLKKANTLGMLNAQEKLTGHVNLENYDNLYQQIEVAEV.

The protein belongs to the carbohydrate kinase PfkB family. LacC subfamily.

The catalysed reaction is D-tagatofuranose 6-phosphate + ATP = D-tagatofuranose 1,6-bisphosphate + ADP + H(+). It functions in the pathway carbohydrate metabolism; D-tagatose 6-phosphate degradation; D-glyceraldehyde 3-phosphate and glycerone phosphate from D-tagatose 6-phosphate: step 1/2. This chain is Tagatose-6-phosphate kinase, found in Streptococcus mutans serotype c (strain ATCC 700610 / UA159).